We begin with the raw amino-acid sequence, 219 residues long: 7-cyano-7-deazaguanine synthase (219 aa).

10–20 (FSGGQDSTTCL) contacts ATP. Zn(2+)-binding residues include cysteine 188, cysteine 196, cysteine 199, and cysteine 202.

It belongs to the QueC family. Zn(2+) serves as cofactor.

The enzyme catalyses 7-carboxy-7-deazaguanine + NH4(+) + ATP = 7-cyano-7-deazaguanine + ADP + phosphate + H2O + H(+). It functions in the pathway purine metabolism; 7-cyano-7-deazaguanine biosynthesis. In terms of biological role, catalyzes the ATP-dependent conversion of 7-carboxy-7-deazaguanine (CDG) to 7-cyano-7-deazaguanine (preQ(0)). This chain is 7-cyano-7-deazaguanine synthase, found in Neisseria gonorrhoeae (strain NCCP11945).